The chain runs to 990 residues: Transposase for transposon Tn3926 (990 aa).

The tract at residues 673–698 (GDGTTSSSDGQNFRTGSKAESTGHIN) is disordered. A compositionally biased stretch (polar residues) spans 674–696 (DGTTSSSDGQNFRTGSKAESTGH).

It belongs to the transposase 7 family.

In terms of biological role, required for transposition of transposon Tn3926. The polypeptide is Transposase for transposon Tn3926 (tnpA) (Escherichia coli).